Here is a 279-residue protein sequence, read N- to C-terminus: MADS-box transcription factor PHERES 1 (279 aa).

Residues 1–60 (MRGKMKLSFIENDSVRKTTFTKRKKGMLKKFNELVTLCGVDACAVIRSPYNSIQEPWPSR) enclose the MADS-box domain.

As to quaternary structure, interacts with AGL61/DIANA and AGL62. As to expression, male gametophyte, embryo and endosperm.

The protein localises to the nucleus. In terms of biological role, probable transcription factor involved in the development of gametophytes and seeds. This Arabidopsis thaliana (Mouse-ear cress) protein is MADS-box transcription factor PHERES 1 (PHE1).